Consider the following 1090-residue polypeptide: Aminopeptidase-like protein AC3.5 (1090 aa).

Residues 1–77 lie on the Cytoplasmic side of the membrane; that stretch reads MEDVDLGKDR…KPKKRIACSP (77 aa). Over residues 21 to 33 the composition is skewed to low complexity; sequence GNGSASNLNNRNN. The segment at 21–71 is disordered; the sequence is GNGSASNLNNRNNIPLSEKAAKEPLQTQPQEAPPAPKPKVQKQKPPVKPKK. Residues 59–71 show a composition bias toward basic residues; it reads KVQKQKPPVKPKK. Residues 78 to 98 form a helical; Signal-anchor for type II membrane protein membrane-spanning segment; that stretch reads GSAICLFLLAVAAIIFAAFLG. Residues 99 to 1090 lie on the Lumenal side of the membrane; the sequence is HYLTKQNYEM…DEMESSEEQE (992 aa). N115, N123, N143, N176, and N230 each carry an N-linked (GlcNAc...) asparagine glycan. The interval 217–259 is disordered; that stretch reads VTKRAKKSVDSGTNSTSEMPEGSGEEAMATTATTTTTESTTPV. Low complexity predominate over residues 241 to 257; that stretch reads EEAMATTATTTTTESTT. N-linked (GlcNAc...) asparagine glycosylation is found at N402, N710, N723, N789, N894, N919, N964, and N993. The span at 1069–1080 shows a compositional bias: basic and acidic residues; sequence YLDGKMKGPAKD. Residues 1069–1090 form a disordered region; it reads YLDGKMKGPAKDDEMESSEEQE. Residues 1081–1090 are compositionally biased toward acidic residues; it reads DEMESSEEQE.

Belongs to the peptidase M1 family.

The protein resides in the membrane. The polypeptide is Aminopeptidase-like protein AC3.5 (Caenorhabditis elegans).